Consider the following 232-residue polypeptide: MSGFAFKQFKVAHEQCAMKVSTDGILLGAWANLSNANSLLDIGTGTGLLALMCKQRSPQLTITAVEVDKNAYQQALQNIAASPWPNIEVHQQSIQTFNSAQPFDVVIANPPYFNHSLKGNNKARNIARHTDGLSFAELISAFKKLSHAGSTFSLILPTTEVAVFIELATQNGLFLNTHCQVKATPNKAISRSLMTFSYINQSIVESALCIKDNENNYSEDYIALCKAFYLKM.

Belongs to the methyltransferase superfamily. tRNA (adenine-N(6)-)-methyltransferase family.

It localises to the cytoplasm. The catalysed reaction is adenosine(37) in tRNA1(Val) + S-adenosyl-L-methionine = N(6)-methyladenosine(37) in tRNA1(Val) + S-adenosyl-L-homocysteine + H(+). In terms of biological role, specifically methylates the adenine in position 37 of tRNA(1)(Val) (anticodon cmo5UAC). This is tRNA1(Val) (adenine(37)-N6)-methyltransferase from Pseudoalteromonas translucida (strain TAC 125).